The following is a 665-amino-acid chain: LisH domain-containing protein ARMC9 (665 aa).

The region spanning 7–39 (HESELLGLVKEYLDFAEFEDTLKTFLKECKIKG) is the LisH domain. A coiled-coil region spans residues 204–235 (QSNKDVLQQLHQQLVEAERRSMTYLKRYNRIQ). Residue S582 is modified to Phosphoserine. Acidic residues predominate over residues 582–603 (SDDDEDEDDEEDHDTMEADLDK). Disordered stretches follow at residues 582–604 (SDDD…LDKD) and 636–665 (RRGT…GYPA).

As to quaternary structure, interacts with TOGARAM1, CCDC66, CEP104, CSPP1 and CEP290. Interacts with NDUFAF2.

It is found in the cytoplasm. It localises to the cytoskeleton. Its subcellular location is the cilium basal body. The protein resides in the cell projection. The protein localises to the cilium. It is found in the microtubule organizing center. It localises to the centrosome. Its subcellular location is the centriole. Functionally, involved in ciliogenesis. It is required for appropriate acetylation and polyglutamylation of ciliary microtubules, and regulation of cilium length. Acts as a positive regulator of hedgehog (Hh)signaling. May participate in the trafficking and/or retention of GLI2 and GLI3 proteins at the ciliary tip. The sequence is that of LisH domain-containing protein ARMC9 (ARMC9) from Bos taurus (Bovine).